The sequence spans 441 residues: Anti-sigma-I factor RsgI (441 aa).

Residues 1-53 are Cytoplasmic-facing; that stretch reads MMNKGIVMDIKKHSVVVLTPNGEFITCKRKGDSCMIGEEISFDEQEQKASRFS. Positions 3 to 51 constitute a RsgI N-terminal anti-sigma domain; the sequence is NKGIVMDIKKHSVVVLTPNGEFITCKRKGDSCMIGEEISFDEQEQKASR. The chain crosses the membrane as a helical span at residues 54–76; it reads IPYFLKPASLLVACFLCALLFFY. Residues 77–441 lie on the Extracellular side of the membrane; it reads NQPEEKVFAY…HQQGNEKKNQ (365 aa). Residues 213–441 form a disordered region; sequence ENEKNKSVTP…HQQGNEKKNQ (229 aa). Over residues 219 to 230 the composition is skewed to polar residues; the sequence is SVTPPATPSNPV. Over residues 240-251 the composition is skewed to low complexity; the sequence is PDSSPDVVPDLS. A compositionally biased stretch (basic and acidic residues) spans 252–281; it reads SVKDKKYEKPEYKEQKKIEEQPTKQIKENN. Low complexity-rich tracts occupy residues 282–328, 336–358, and 366–408; these read GRGS…QQGN, NNGH…QQGN, and NNGH…NGRG. The span at 411-428 shows a compositional bias: polar residues; it reads KENVGNEQGNNGRGSQQE. Positions 429-441 are enriched in basic and acidic residues; it reads NRGHQQGNEKKNQ.

In terms of assembly, interacts (via RsgI N-terminal anti-sigma domain) with SigI.

The protein localises to the cell membrane. Functionally, anti-sigma factor for SigI. Negatively regulates SigI activity through direct interaction. Has no direct effect on virulence gene expression. In Bacillus anthracis, this protein is Anti-sigma-I factor RsgI.